Reading from the N-terminus, the 576-residue chain is Proline--tRNA ligase (576 aa).

This sequence belongs to the class-II aminoacyl-tRNA synthetase family. ProS type 1 subfamily. In terms of assembly, homodimer.

Its subcellular location is the cytoplasm. It catalyses the reaction tRNA(Pro) + L-proline + ATP = L-prolyl-tRNA(Pro) + AMP + diphosphate. Its function is as follows. Catalyzes the attachment of proline to tRNA(Pro) in a two-step reaction: proline is first activated by ATP to form Pro-AMP and then transferred to the acceptor end of tRNA(Pro). As ProRS can inadvertently accommodate and process non-cognate amino acids such as alanine and cysteine, to avoid such errors it has two additional distinct editing activities against alanine. One activity is designated as 'pretransfer' editing and involves the tRNA(Pro)-independent hydrolysis of activated Ala-AMP. The other activity is designated 'posttransfer' editing and involves deacylation of mischarged Ala-tRNA(Pro). The misacylated Cys-tRNA(Pro) is not edited by ProRS. The protein is Proline--tRNA ligase of Finegoldia magna (strain ATCC 29328 / DSM 20472 / WAL 2508) (Peptostreptococcus magnus).